Reading from the N-terminus, the 1353-residue chain is Ankyrin repeat domain-containing protein 36B (1353 aa).

ANK repeat units follow at residues 19–48 (YHLKRIHRAVLRGNLEKLKYLLLTYYDANK), 52–81 (KERTALHLACATGQPEMVHLLVSRRCELNL), 85–114 (EDRTPLIKAVQLRQEACATLLLQNGADPNI), 118–147 (FGRTALHYAVYNEDTSMIEKLLSHGTNIEE), 151–180 (NEYQPLLLAVSRRKVKMVEFLLKKKANVNA), and 184–213 (LGRSALILAVTLGEKDIVILLLQHNIDVFS). Disordered stretches follow at residues 249–307 (PINS…KDSV) and 349–607 (MGGG…KATS). The span at 250–259 (INSNPVSPQK) shows a compositional bias: polar residues. Basic and acidic residues-rich tracts occupy residues 260–272 (QRAEKATSDDKDS) and 295–306 (PAEKATSDEKDS). 2 stretches are compositionally biased toward polar residues: residues 355–367 (GTVSSQKQPASKT) and 389–400 (GTVSSQKQQALK). Basic and acidic residues-rich tracts occupy residues 436-455 (TSDEKDSFSNITREKKDGEI) and 471-491 (SVKEDSVLNIAREKKDGEKSR). Residues 579–600 (VSNIPTEIKDGQQSGTVSSQKQ) are compositionally biased toward polar residues. Coiled coils occupy residues 731 to 762 (AEQDLEMASEGEQKRLEEYENNQPQVKNQIHS), 821 to 908 (IKLK…YRIE), 937 to 1055 (SETD…DHDQ), and 1119 to 1344 (VFEH…LQHS).

It belongs to the ANKRD36 family.

This chain is Ankyrin repeat domain-containing protein 36B (ANKRD36B), found in Homo sapiens (Human).